The primary structure comprises 124 residues: Small ribosomal subunit protein bS16 (124 aa).

The interval 88–124 (VPEQTKQAQPKAKAQERLREAEEKARAAAEAAASAEG) is disordered. Residues 100 to 114 (KAQERLREAEEKARA) are compositionally biased toward basic and acidic residues. A compositionally biased stretch (low complexity) spans 115–124 (AAEAAASAEG).

Belongs to the bacterial ribosomal protein bS16 family.

This chain is Small ribosomal subunit protein bS16, found in Rhodospirillum rubrum (strain ATCC 11170 / ATH 1.1.1 / DSM 467 / LMG 4362 / NCIMB 8255 / S1).